Reading from the N-terminus, the 376-residue chain is Putative F-box protein At3g18330 (376 aa).

An F-box domain is found at 1–46; sequence MPMPNLPKELVEEILSFVPATYLKRLSATCKPWNRLIHNDKRFARK.

This chain is Putative F-box protein At3g18330, found in Arabidopsis thaliana (Mouse-ear cress).